The sequence spans 250 residues: Leucyl/phenylalanyl-tRNA--protein transferase (250 aa).

Belongs to the L/F-transferase family.

The protein resides in the cytoplasm. It carries out the reaction N-terminal L-lysyl-[protein] + L-leucyl-tRNA(Leu) = N-terminal L-leucyl-L-lysyl-[protein] + tRNA(Leu) + H(+). It catalyses the reaction N-terminal L-arginyl-[protein] + L-leucyl-tRNA(Leu) = N-terminal L-leucyl-L-arginyl-[protein] + tRNA(Leu) + H(+). The catalysed reaction is L-phenylalanyl-tRNA(Phe) + an N-terminal L-alpha-aminoacyl-[protein] = an N-terminal L-phenylalanyl-L-alpha-aminoacyl-[protein] + tRNA(Phe). Its function is as follows. Functions in the N-end rule pathway of protein degradation where it conjugates Leu, Phe and, less efficiently, Met from aminoacyl-tRNAs to the N-termini of proteins containing an N-terminal arginine or lysine. The chain is Leucyl/phenylalanyl-tRNA--protein transferase from Cupriavidus pinatubonensis (strain JMP 134 / LMG 1197) (Cupriavidus necator (strain JMP 134)).